The chain runs to 228 residues: Homeobox protein Hox-B6a (228 aa).

Residues 132-137 (VYPWMQ) carry the Antp-type hexapeptide motif. The segment at residues 150–209 (GRRGRQTYTRYQTLELEKEFHFNRYLTRRRRIEIAHALCLTERQIKIWFQNRRMKWKKEN) is a DNA-binding region (homeobox).

It belongs to the Antp homeobox family.

The protein resides in the nucleus. Its function is as follows. Sequence-specific transcription factor which is part of a developmental regulatory system that provides cells with specific positional identities on the anterior-posterior axis. The polypeptide is Homeobox protein Hox-B6a (hoxb6a) (Danio rerio (Zebrafish)).